Here is a 362-residue protein sequence, read N- to C-terminus: Sulfate/thiosulfate import ATP-binding protein CysA (362 aa).

The region spanning isoleucine 13–leucine 243 is the ABC transporter domain. Glycine 45–serine 52 contacts ATP.

It belongs to the ABC transporter superfamily. Sulfate/tungstate importer (TC 3.A.1.6) family. In terms of assembly, the complex is composed of two ATP-binding proteins (CysA), two transmembrane proteins (CysT and CysW) and a solute-binding protein (CysP).

Its subcellular location is the cell membrane. It catalyses the reaction sulfate(out) + ATP + H2O = sulfate(in) + ADP + phosphate + H(+). The enzyme catalyses thiosulfate(out) + ATP + H2O = thiosulfate(in) + ADP + phosphate + H(+). In terms of biological role, part of the ABC transporter complex CysAWTP involved in sulfate/thiosulfate import. Responsible for energy coupling to the transport system. This chain is Sulfate/thiosulfate import ATP-binding protein CysA, found in Mycolicibacterium paratuberculosis (strain ATCC BAA-968 / K-10) (Mycobacterium paratuberculosis).